The following is a 233-amino-acid chain: Putative N-acetylmuramoyl-L-alanine amidase (233 aa).

Residues 1–219 (MIDPGHGGQD…IANAIYIALK (219 aa)) form the MurNAc-LAA domain.

It belongs to the N-acetylmuramoyl-L-alanine amidase 3 family.

It is found in the secreted. It catalyses the reaction Hydrolyzes the link between N-acetylmuramoyl residues and L-amino acid residues in certain cell-wall glycopeptides.. Cell-wall hydrolase involved in septum cleavage during cell division. The chain is Putative N-acetylmuramoyl-L-alanine amidase (amiB) from Buchnera aphidicola subsp. Schizaphis graminum (strain Sg).